The following is a 359-amino-acid chain: 3-dehydroquinate synthase (359 aa).

NAD(+) is bound by residues 69 to 74 (DGEAYK), 103 to 107 (GVIGD), 127 to 128 (TT), Lys140, Lys149, and 167 to 170 (CLKT). The Zn(2+) site is built by Glu182, His245, and His262.

The protein belongs to the sugar phosphate cyclases superfamily. Dehydroquinate synthase family. It depends on Co(2+) as a cofactor. Zn(2+) is required as a cofactor. NAD(+) serves as cofactor.

The protein resides in the cytoplasm. It carries out the reaction 7-phospho-2-dehydro-3-deoxy-D-arabino-heptonate = 3-dehydroquinate + phosphate. The protein operates within metabolic intermediate biosynthesis; chorismate biosynthesis; chorismate from D-erythrose 4-phosphate and phosphoenolpyruvate: step 2/7. Catalyzes the conversion of 3-deoxy-D-arabino-heptulosonate 7-phosphate (DAHP) to dehydroquinate (DHQ). The protein is 3-dehydroquinate synthase of Aeromonas salmonicida (strain A449).